Consider the following 510-residue polypeptide: Nucleosome assembly protein 1-like 3 (510 aa).

2 disordered regions span residues 1–99 and 161–311; these read MAEA…LGTN and PTEE…KRED. Residues 35-74 show a composition bias toward low complexity; the sequence is SSSSSSSTSGSSSSSSTSGSSSSSGSGSSSSSSGSGSTSS. Residues 161-182 show a composition bias toward acidic residues; it reads PTEEECEWNSEDEEFSSDEEVQ. Composition is skewed to basic and acidic residues over residues 200–229, 235–246, and 254–300; these read PKENPEVKAEEKEVPKEIPEVKDEEKEVPK, KAEEKADSKDCM, and EDPK…VDLK.

It belongs to the nucleosome assembly protein (NAP) family.

It localises to the nucleus. The chain is Nucleosome assembly protein 1-like 3 (NAP1L3) from Pongo abelii (Sumatran orangutan).